A 255-amino-acid chain; its full sequence is NAD-dependent protein deacylase (255 aa).

Residues 1–252 enclose the Deacetylase sirtuin-type domain; the sequence is MPKLVVFSGA…AEIEQELEQF (252 aa). Residue 9–28 coordinates NAD(+); it reads GAGLSAESGLETFRDNGGLW. Substrate-binding residues include tyrosine 53 and arginine 56. 103–106 is an NAD(+) binding site; it reads QNVD. Residue histidine 121 is the Proton acceptor of the active site. Positions 129, 132, 148, and 151 each coordinate Zn(2+). Residues 190–192, 218–220, and threonine 238 each bind NAD(+); these read GTS and NLQ.

It belongs to the sirtuin family. Class III subfamily. The cofactor is Zn(2+).

Its subcellular location is the cytoplasm. It catalyses the reaction N(6)-acetyl-L-lysyl-[protein] + NAD(+) + H2O = 2''-O-acetyl-ADP-D-ribose + nicotinamide + L-lysyl-[protein]. The catalysed reaction is N(6)-succinyl-L-lysyl-[protein] + NAD(+) + H2O = 2''-O-succinyl-ADP-D-ribose + nicotinamide + L-lysyl-[protein]. NAD-dependent lysine deacetylase and desuccinylase that specifically removes acetyl and succinyl groups on target proteins. Modulates the activities of several proteins which are inactive in their acylated form. The chain is NAD-dependent protein deacylase from Helicobacter hepaticus (strain ATCC 51449 / 3B1).